The sequence spans 922 residues: Up-regulator of cell proliferation (922 aa).

Residues 1–20 (MASSGHSDLGEVTSEIKASE) are disordered. Ser3 carries the phosphoserine modification. Residues 680 to 920 (RSRLVVLSAL…NIQQLIELVR (241 aa)) form the VLIG-type G domain.

It belongs to the TRAFAC class dynamin-like GTPase superfamily. Very large inducible GTPase (VLIG) family.

It localises to the cytoplasm. Its subcellular location is the nucleus. In terms of biological role, may be involved in cell cycle progression through the regulation of cyclin D1 expression. The sequence is that of Up-regulator of cell proliferation (URGCP) from Bos taurus (Bovine).